We begin with the raw amino-acid sequence, 451 residues long: Methionine aminopeptidase 2-2 (451 aa).

A disordered region spans residues 1-97; it reads MAAQVEDDVA…PRVLISDLFP (97 aa). Residues 19 to 28 are compositionally biased toward polar residues; that stretch reads TKPTNGTSQP. Residues 35-45 show a composition bias toward acidic residues; it reads EAEDSDDDAEG. The segment covering 60–73 has biased composition (basic residues); that stretch reads KKKKKRKPRKKKKA. Residues 74–83 are compositionally biased toward low complexity; that stretch reads GTSATAGAKS. His-204 contacts substrate. A divalent metal cation is bound by residues Asp-224, Asp-235, and His-304. Substrate is bound at residue His-312. Residues Glu-337 and Glu-432 each coordinate a divalent metal cation.

Belongs to the peptidase M24A family. Methionine aminopeptidase eukaryotic type 2 subfamily. Co(2+) is required as a cofactor. Requires Zn(2+) as cofactor. The cofactor is Mn(2+). Fe(2+) serves as cofactor.

It is found in the cytoplasm. It carries out the reaction Release of N-terminal amino acids, preferentially methionine, from peptides and arylamides.. In terms of biological role, cotranslationally removes the N-terminal methionine from nascent proteins. The N-terminal methionine is often cleaved when the second residue in the primary sequence is small and uncharged (Met-Ala-, Cys, Gly, Pro, Ser, Thr, or Val). In Leptosphaeria maculans (strain JN3 / isolate v23.1.3 / race Av1-4-5-6-7-8) (Blackleg fungus), this protein is Methionine aminopeptidase 2-2.